The chain runs to 274 residues: MSDNEIVAGIMRDHIINLLKEGKRIDDRGFEDYRPIEIEVGIIEKAEGSALVKLGSTQVLVGIKTTLGEPFPDTPNMGVMTTNVELVPLASPTFEPGPPDERAIELARVTDRGIRESRALNLEKMVIVPGKIVRVVFIDVHVLDHDGNLMDAIGIASIAALLNAKVPKVEYNEETGEVEILEEKEPLPVERIPIPVTFAKIGNILVVDPSLEEELVMDGRLTVTTDETGHISAVQKGEGGAFKLEEVMYAVETAFKKAEEIRKIVLEAIKKSGE.

Belongs to the RNase PH family. Rrp42 subfamily. Component of the archaeal exosome complex. Forms a hexameric ring-like arrangement composed of 3 Rrp41-Rrp42 heterodimers. The hexameric ring associates with a trimer of Rrp4 and/or Csl4 subunits.

The protein resides in the cytoplasm. Its function is as follows. Non-catalytic component of the exosome, which is a complex involved in RNA degradation. Contributes to the structuring of the Rrp41 active site. The protein is Exosome complex component Rrp42 of Pyrococcus horikoshii (strain ATCC 700860 / DSM 12428 / JCM 9974 / NBRC 100139 / OT-3).